Reading from the N-terminus, the 461-residue chain is Cysteine--tRNA ligase (461 aa).

Residue Cys-28 participates in Zn(2+) binding. The 'HIGH' region motif lies at 30–40 (ITIYDLCHIGH). Cys-209, His-234, and Glu-238 together coordinate Zn(2+). The short motif at 266-270 (KMSKS) is the 'KMSKS' region element. Lys-269 contributes to the ATP binding site.

It belongs to the class-I aminoacyl-tRNA synthetase family. As to quaternary structure, monomer. It depends on Zn(2+) as a cofactor.

The protein resides in the cytoplasm. The enzyme catalyses tRNA(Cys) + L-cysteine + ATP = L-cysteinyl-tRNA(Cys) + AMP + diphosphate. This Yersinia enterocolitica serotype O:8 / biotype 1B (strain NCTC 13174 / 8081) protein is Cysteine--tRNA ligase.